A 420-amino-acid chain; its full sequence is Glucose-1-phosphate adenylyltransferase (420 aa).

Alpha-D-glucose 1-phosphate contacts are provided by residues Y107, G172, 187–188, and S205; that span reads EK.

It belongs to the bacterial/plant glucose-1-phosphate adenylyltransferase family. Homotetramer.

It catalyses the reaction alpha-D-glucose 1-phosphate + ATP + H(+) = ADP-alpha-D-glucose + diphosphate. It participates in glycan biosynthesis; glycogen biosynthesis. In terms of biological role, involved in the biosynthesis of ADP-glucose, a building block required for the elongation reactions to produce glycogen. Catalyzes the reaction between ATP and alpha-D-glucose 1-phosphate (G1P) to produce pyrophosphate and ADP-Glc. This chain is Glucose-1-phosphate adenylyltransferase, found in Sinorhizobium fredii (strain NBRC 101917 / NGR234).